The following is a 197-amino-acid chain: Adenylate kinase isoenzyme 6 homolog FAP7 (197 aa).

Glycine 17, glycine 19, lysine 20, serine 21, and serine 22 together coordinate ATP. The segment at 38-61 is NMPbind; sequence NISDFAKDNDCFEGYDEGRKSHIV. The tract at residues 113 to 123 is LID; the sequence is ARGYHDSKIEE. Residue arginine 114 coordinates ATP. Residues 176–197 form a disordered region; it reads PDGVTNEYQGPRSDDEDDEDSE. A Phosphotyrosine modification is found at tyrosine 183. Phosphoserine occurs at positions 188 and 196.

Belongs to the adenylate kinase family. AK6 subfamily. In terms of assembly, interacts with small ribosomal subunit protein uS11B/RPS14B. Not a structural component of 43S pre-ribosomes, but transiently interacts with them by binding to uS11/RPS14.

Its subcellular location is the cytoplasm. It is found in the nucleus. It carries out the reaction AMP + ATP = 2 ADP. The catalysed reaction is ATP + H2O = ADP + phosphate + H(+). Its function is as follows. Broad-specificity nucleoside monophosphate (NMP) kinase that catalyzes the reversible transfer of the terminal phosphate group between nucleoside triphosphates and monophosphates. Also has ATPase activity. Involved in the late cytoplasmic maturation steps of the 40S ribosomal particles, specifically 18S rRNA maturation. Required for cleavage of the 20S pre-rRNA at site D in the cytoplasm. While NMP activity is not required for ribosome maturation, ATPase activity is. Associates transiently with small ribosomal subunit protein uS11. ATP hydrolysis breaks the interaction with uS11. May temporarily remove uS11 from the ribosome to enable a conformational change of the ribosomal RNA that is needed for the final maturation step of the small ribosomal subunit. Promotes formation of the rotated state in 80S-like ribosomes, a key intermediate in translocation, thereby releasing the essential assembly factor DIM1 from pre-40S subunits. Its NMP activity may have a role in nuclear energy homeostasis. Involved in oxidative stress response. Required for POS9-dependent target gene transcription upon oxidative stress. This is Adenylate kinase isoenzyme 6 homolog FAP7 from Saccharomyces cerevisiae (strain ATCC 204508 / S288c) (Baker's yeast).